The chain runs to 2135 residues: Protein SUBSTANDARD STARCH GRAIN 4, chloroplastic (2135 aa).

2 stretches are compositionally biased toward low complexity: residues 1-10 (MSHCLRASPF) and 72-84 (QHQP…RQQQ). A chloroplast-targeting transit peptide spans 1–42 (MSHCLRASPFLSPPPPLLHPSRRRRHRQGGCIHTSPGTRPLV). Disordered stretches follow at residues 1–44 (MSHC…LVAR) and 58–89 (SDSS…PPPP). Residues 43–104 (ARARFDPPPL…ASLAPLWREG (62 aa)) are Stromal-facing. Residues 105–125 (LFLVRCSVFAAALSVAAALSW) traverse the membrane as a helical segment. Topologically, residues 126–2135 (YAQLRARSFV…LFEYSATSQG (2010 aa)) are chloroplast intermembrane. The segment covering 361-370 (RRRYRRKAHS) has biased composition (basic residues). Disordered stretches follow at residues 361-382 (RRRY…SSQQ), 401-492 (SGNP…QVSE), and 1843-1869 (FLGS…SFKP). Polar residues-rich tracts occupy residues 373–382 (ISDTDNSSQQ), 454–490 (NFAS…NEQV), and 1846–1856 (SLSTSPDGQQS). Basic and acidic residues predominate over residues 1857-1866 (ETERTPEHGS).

It belongs to the TamB family. Part of the TIC complex, which can interact with components of the TOC complex to form a larger import complex. As to expression, highly expressed in third leaf and developing seeds. Expressed in anthers, pistils, flag leaves and young panicles.

The protein resides in the plastid. Its subcellular location is the chloroplast inner membrane. It localises to the chloroplast intermembrane space. It is found in the chloroplast. The protein localises to the amyloplast. Its function is as follows. Part of the inner chloroplast membrane translocon complex (TIC) which associates with the outer chloroplast membrane translocon complex (TOC) and forms a supercomplex involved in protein precursor import into the chloroplast stroma. Required for the regulation of starch granule size in amyloplasts. This is Protein SUBSTANDARD STARCH GRAIN 4, chloroplastic from Oryza sativa subsp. japonica (Rice).